We begin with the raw amino-acid sequence, 75 residues long: Small ribosomal subunit protein bS18 (75 aa).

Belongs to the bacterial ribosomal protein bS18 family. As to quaternary structure, part of the 30S ribosomal subunit. Forms a tight heterodimer with protein bS6.

Binds as a heterodimer with protein bS6 to the central domain of the 16S rRNA, where it helps stabilize the platform of the 30S subunit. The protein is Small ribosomal subunit protein bS18 of Saccharophagus degradans (strain 2-40 / ATCC 43961 / DSM 17024).